Consider the following 226-residue polypeptide: Flagellar L-ring protein (226 aa).

An N-terminal signal peptide occupies residues 1 to 15 (MRILGLSAALLILGG). The N-palmitoyl cysteine moiety is linked to residue cysteine 16. A lipid anchor (S-diacylglycerol cysteine) is attached at cysteine 16.

Belongs to the FlgH family. The basal body constitutes a major portion of the flagellar organelle and consists of four rings (L,P,S, and M) mounted on a central rod.

The protein resides in the cell outer membrane. It localises to the bacterial flagellum basal body. Assembles around the rod to form the L-ring and probably protects the motor/basal body from shearing forces during rotation. In Alteromonas mediterranea (strain DSM 17117 / CIP 110805 / LMG 28347 / Deep ecotype), this protein is Flagellar L-ring protein.